The following is a 407-amino-acid chain: Arginine biosynthesis bifunctional protein ArgJ (407 aa).

6 residues coordinate substrate: Thr-157, Lys-183, Thr-194, Glu-280, Asn-402, and Thr-407. Residue Thr-194 is the Nucleophile of the active site.

This sequence belongs to the ArgJ family. As to quaternary structure, heterotetramer of two alpha and two beta chains.

The protein localises to the cytoplasm. It carries out the reaction N(2)-acetyl-L-ornithine + L-glutamate = N-acetyl-L-glutamate + L-ornithine. The enzyme catalyses L-glutamate + acetyl-CoA = N-acetyl-L-glutamate + CoA + H(+). The protein operates within amino-acid biosynthesis; L-arginine biosynthesis; L-ornithine and N-acetyl-L-glutamate from L-glutamate and N(2)-acetyl-L-ornithine (cyclic): step 1/1. It functions in the pathway amino-acid biosynthesis; L-arginine biosynthesis; N(2)-acetyl-L-ornithine from L-glutamate: step 1/4. Functionally, catalyzes two activities which are involved in the cyclic version of arginine biosynthesis: the synthesis of N-acetylglutamate from glutamate and acetyl-CoA as the acetyl donor, and of ornithine by transacetylation between N(2)-acetylornithine and glutamate. In Bacillus cereus (strain ATCC 10987 / NRS 248), this protein is Arginine biosynthesis bifunctional protein ArgJ.